A 388-amino-acid polypeptide reads, in one-letter code: 2-epi-5-epi-valiolone synthase (388 aa).

NAD(+) is bound by residues 92–95 (ERNK), 124–128 (GIVAD), 148–149 (TT), K161, K170, and 188–191 (LLAT). Residues E203, H267, and H283 each coordinate Zn(2+).

The protein belongs to the sugar phosphate cyclases superfamily. EEVS-like family. NAD(+) serves as cofactor. It depends on Co(2+) as a cofactor. Requires Zn(2+) as cofactor.

The enzyme catalyses D-sedoheptulose 7-phosphate = 2-epi-5-epi-valiolone + phosphate. Its function is as follows. Catalyzes the cyclization of D-sedoheptulose 7-phosphate to 2-epi-5-epi-valiolone. Probably involved in acarbose biosynthesis. The chain is 2-epi-5-epi-valiolone synthase from Streptomyces glaucescens.